Here is a 205-residue protein sequence, read N- to C-terminus: Inactive ribonuclease-like protein 9 (205 aa).

Positions 1–24 (MMLITTHSLPLLLLLLQLWQPLQF) are cleaved as a signal peptide. Cystine bridges form between cysteine 97/cysteine 152, cysteine 115/cysteine 167, and cysteine 122/cysteine 129. 2 N-linked (GlcNAc...) asparagine glycosylation sites follow: asparagine 130 and asparagine 142.

This sequence belongs to the pancreatic ribonuclease family.

The protein resides in the secreted. Functionally, does not exhibit any ribonuclease activity. This Cebus albifrons (White-fronted capuchin) protein is Inactive ribonuclease-like protein 9 (RNASE9).